Reading from the N-terminus, the 1342-residue chain is DNA-directed RNA polymerase subunit beta (1342 aa).

Belongs to the RNA polymerase beta chain family. The RNAP catalytic core consists of 2 alpha, 1 beta, 1 beta' and 1 omega subunit. When a sigma factor is associated with the core the holoenzyme is formed, which can initiate transcription.

The enzyme catalyses RNA(n) + a ribonucleoside 5'-triphosphate = RNA(n+1) + diphosphate. Its function is as follows. DNA-dependent RNA polymerase catalyzes the transcription of DNA into RNA using the four ribonucleoside triphosphates as substrates. This is DNA-directed RNA polymerase subunit beta from Histophilus somni (strain 129Pt) (Haemophilus somnus).